Here is a 605-residue protein sequence, read N- to C-terminus: Leucine-rich repeat-containing protein 40 (605 aa).

The segment at 1 to 21 (MSRFKRGGKAPDPLSGFRAPK) is disordered. LRR repeat units lie at residues 83–104 (DLTK…ISLL), 106–127 (ALVV…IREL), 129–151 (NLQK…QHLQ), 152–173 (NLKS…IGHL), 175–196 (ILEE…VGQL), 198–219 (GLVK…IGKM), 221–242 (NLRQ…VAGM), 244–265 (SLEQ…PFLT), 266–287 (KLKE…HLQN), 290–311 (SLSV…ISLL), 313–335 (GLER…GSLP), 336–357 (NLKS…ILNK), 429–450 (PITT…IVEM), 453–475 (SVYD…CMLL), 476–497 (KLTH…MEAL), 499–520 (RLQS…LYTI), 522–543 (NLET…QLKK), 546–567 (KLST…LGNC), and 569–590 (SLRA…ILAK).

In Xenopus laevis (African clawed frog), this protein is Leucine-rich repeat-containing protein 40 (lrrc40).